We begin with the raw amino-acid sequence, 380 residues long: Cytochrome b (380 aa).

4 helical membrane-spanning segments follow: residues 34–54 (FGSLLGLCLIAQIATGLFLAM), 78–99 (WLLRNLHANGASFFFICIYFHI), 114–134 (WNIGVILLFLLMATAFVGYVL), and 179–199 (FFTFHFILPFIITAVSLIHLL). Heme b contacts are provided by His84 and His98. His183 and His197 together coordinate heme b. His202 is an a ubiquinone binding site. Transmembrane regions (helical) follow at residues 227-247 (YKDLLGFVIMLGALASLSTFA), 289-309 (LGGVLAVVLSIMVLFLMPIIH), 321-341 (IAKTFFWALIANTAILTWIGG), and 348-368 (FITIGQIASGLYFLIFVLLIP).

The protein belongs to the cytochrome b family. As to quaternary structure, the cytochrome bc1 complex contains 3 respiratory subunits (MT-CYB, CYC1 and UQCRFS1), 2 core proteins (UQCRC1 and UQCRC2) and probably 6 low-molecular weight proteins. Heme b is required as a cofactor.

It is found in the mitochondrion inner membrane. Functionally, component of the ubiquinol-cytochrome c reductase complex (complex III or cytochrome b-c1 complex) that is part of the mitochondrial respiratory chain. The b-c1 complex mediates electron transfer from ubiquinol to cytochrome c. Contributes to the generation of a proton gradient across the mitochondrial membrane that is then used for ATP synthesis. The polypeptide is Cytochrome b (mt-cyb) (Rana amurensis (Siberian wood frog)).